A 162-amino-acid chain; its full sequence is UPF0260 protein Caul_3920 (162 aa).

The protein belongs to the UPF0260 family.

The polypeptide is UPF0260 protein Caul_3920 (Caulobacter sp. (strain K31)).